The following is a 103-amino-acid chain: Histone H4 (103 aa).

Positions 1 to 14 are enriched in gly residues; that stretch reads MSGRGKGGKGLGKG. Residues 1 to 20 are disordered; that stretch reads MSGRGKGGKGLGKGGAKRHR. S2 carries the post-translational modification N-acetylserine. K17 is modified (N6-acetyllysine). Residues 17-21 mediate DNA binding; the sequence is KRHRK. K21 is subject to N6-methyllysine.

This sequence belongs to the histone H4 family. The nucleosome is a histone octamer containing two molecules each of H2A, H2B, H3 and H4 assembled in one H3-H4 heterotetramer and two H2A-H2B heterodimers. The octamer wraps approximately 147 bp of DNA.

It is found in the nucleus. Its subcellular location is the chromosome. In terms of biological role, core component of nucleosome. Nucleosomes wrap and compact DNA into chromatin, limiting DNA accessibility to the cellular machineries which require DNA as a template. Histones thereby play a central role in transcription regulation, DNA repair, DNA replication and chromosomal stability. DNA accessibility is regulated via a complex set of post-translational modifications of histones, also called histone code, and nucleosome remodeling. The polypeptide is Histone H4 (Pyrenomonas salina).